The primary structure comprises 77 residues: Putative antitoxin VapB3 (77 aa).

Belongs to the UPF0330 family.

Functionally, possibly the antitoxin component of a type II toxin-antitoxin (TA) system. Its cognate toxin is VapC3 (Potential). The chain is Putative antitoxin VapB3 (vapB3) from Methanocaldococcus jannaschii (strain ATCC 43067 / DSM 2661 / JAL-1 / JCM 10045 / NBRC 100440) (Methanococcus jannaschii).